Reading from the N-terminus, the 498-residue chain is tRNA-guanine(15) transglycosylase (498 aa).

D85 functions as the Nucleophile in the catalytic mechanism. D120 serves as a coordination point for substrate. Residues C275, C277, and C280 each coordinate Zn(2+).

This sequence belongs to the archaeosine tRNA-ribosyltransferase family. The cofactor is Zn(2+).

It catalyses the reaction guanosine(15) in tRNA + 7-cyano-7-deazaguanine = 7-cyano-7-carbaguanosine(15) in tRNA + guanine. Its pathway is tRNA modification; archaeosine-tRNA biosynthesis. Exchanges the guanine residue with 7-cyano-7-deazaguanine (preQ0) at position 15 in the dihydrouridine loop (D-loop) of archaeal tRNAs. The protein is tRNA-guanine(15) transglycosylase of Sulfolobus acidocaldarius (strain ATCC 33909 / DSM 639 / JCM 8929 / NBRC 15157 / NCIMB 11770).